A 123-amino-acid polypeptide reads, in one-letter code: UPF0102 protein Cbei_1183 (123 aa).

It belongs to the UPF0102 family.

This is UPF0102 protein Cbei_1183 from Clostridium beijerinckii (strain ATCC 51743 / NCIMB 8052) (Clostridium acetobutylicum).